The following is a 524-amino-acid chain: Decreased expression in renal and prostate cancer protein (524 aa).

The span at 1–12 (MKEPRIFPRERP) shows a compositional bias: basic and acidic residues. Disordered regions lie at residues 1–43 (MKEP…TGHP) and 64–252 (PFPR…LDAR). Residues 129–148 (LNPRTGALPGPGPLSNPRLG) show a composition bias toward low complexity. Residues 163-181 (GLLGAGPDPRGGGPMGPGS) show a composition bias toward gly residues. A Phosphoserine modification is found at serine 302. The span at 312–323 (PMGPNSGPSSRG) shows a compositional bias: low complexity. The segment at 312 to 332 (PMGPNSGPSSRGIGLPGPNPS) is disordered. Arginine 364 carries the asymmetric dimethylarginine modification. Arginine 387 carries the post-translational modification Omega-N-methylarginine. Serine 423 carries the post-translational modification Phosphoserine.

The protein belongs to the DERPC family. In terms of tissue distribution, ubiquitously expressed, with abundant expression in kidney, skeletal muscle, testis, liver, ovary, and heart and moderate expression in prostate. Expression is significantly reduced in renal and prostate tumors. No differential expression in breast cancer cells, between lobular carcinoma and normal lobules.

The protein localises to the nucleus. Potential tumor suppressor. Inhibits prostate tumor cell growth, when overexpressed. The polypeptide is Decreased expression in renal and prostate cancer protein (Homo sapiens (Human)).